Consider the following 324-residue polypeptide: Adipolin (324 aa).

Residues 1–24 (MRCWVWLLVAIVLCQQLSVVRVLA) form the signal peptide. 2 disordered regions span residues 28-66 (ERKK…DPGL) and 83-121 (GANS…MPGA). A compositionally biased stretch (polar residues) spans 40 to 49 (EPFNVSLSNS). Asparagine 43 is a glycosylation site (N-linked (GlcNAc...) asparagine). Positions 50-60 (EELHETDKLSE) are enriched in basic and acidic residues. Basic residues predominate over residues 86–98 (SKKKCKGKDKKLR). Residues 103 to 118 (PPGPPGPQGPPGPPGM) show a composition bias toward pro residues. The C1q domain maps to 169–324 (YRRVDEGFHC…SDFMGILMGL (156 aa)).

Belongs to the adipolin/erythroferrone family. Homomultimer; disulfide-linked.

It is found in the secreted. Functionally, insulin-sensitizing adipocyte-secreted protein (adipokine) that regulates glucose metabolism in liver and adipose tissue. This chain is Adipolin (c1qtnf12), found in Xenopus tropicalis (Western clawed frog).